The following is a 308-amino-acid chain: ADP-L-glycero-D-manno-heptose-6-epimerase (308 aa).

NADP(+) is bound by residues 10–11, 31–32, Lys38, Lys53, 75–79, and Asn92; these read MI, DN, and EGACS. The Proton acceptor role is filled by Tyr140. Lys144 is a binding site for NADP(+). Asn169 contributes to the substrate binding site. Positions 170 and 178 each coordinate NADP(+). The active-site Proton acceptor is Lys178. Substrate is bound by residues Ser180, His187, 201–204, Arg209, and Tyr272; that span reads FEGS.

Belongs to the NAD(P)-dependent epimerase/dehydratase family. HldD subfamily. As to quaternary structure, homopentamer. Requires NADP(+) as cofactor.

It catalyses the reaction ADP-D-glycero-beta-D-manno-heptose = ADP-L-glycero-beta-D-manno-heptose. It participates in nucleotide-sugar biosynthesis; ADP-L-glycero-beta-D-manno-heptose biosynthesis; ADP-L-glycero-beta-D-manno-heptose from D-glycero-beta-D-manno-heptose 7-phosphate: step 4/4. Catalyzes the interconversion between ADP-D-glycero-beta-D-manno-heptose and ADP-L-glycero-beta-D-manno-heptose via an epimerization at carbon 6 of the heptose. The polypeptide is ADP-L-glycero-D-manno-heptose-6-epimerase (Actinobacillus pleuropneumoniae serotype 7 (strain AP76)).